We begin with the raw amino-acid sequence, 276 residues long: Large ribosomal subunit protein uL2 (276 aa).

The tract at residues Met-225–Lys-276 is disordered. Basic residues predominate over residues Lys-257–Lys-276.

Belongs to the universal ribosomal protein uL2 family. As to quaternary structure, part of the 50S ribosomal subunit. Forms a bridge to the 30S subunit in the 70S ribosome.

One of the primary rRNA binding proteins. Required for association of the 30S and 50S subunits to form the 70S ribosome, for tRNA binding and peptide bond formation. It has been suggested to have peptidyltransferase activity; this is somewhat controversial. Makes several contacts with the 16S rRNA in the 70S ribosome. The sequence is that of Large ribosomal subunit protein uL2 from Desulfitobacterium hafniense (strain DSM 10664 / DCB-2).